The primary structure comprises 123 residues: uncharacterized protein (123 aa).

The signal sequence occupies residues 1–25; that stretch reads MKHGIKALLITLSLACAGMSHSALA. Over residues 40 to 53 the composition is skewed to low complexity; sequence EAPAAQSKAAVPAK. Positions 40-62 are disordered; sequence EAPAAQSKAAVPAKASDEEGTRV. HhH domains are found at residues 60–90 and 91–120; these read TRVS…IVSY and REEY…NLAV.

This is an uncharacterized protein from Escherichia coli (strain K12).